A 700-amino-acid polypeptide reads, in one-letter code: Elongation factor G (700 aa).

In terms of domain architecture, tr-type G spans 10–286 (NKVRNIGIMA…AVIDYLPNPL (277 aa)). GTP-binding positions include 19-26 (AHIDAGKT), 83-87 (DTPGH), and 137-140 (NKMD).

Belongs to the TRAFAC class translation factor GTPase superfamily. Classic translation factor GTPase family. EF-G/EF-2 subfamily.

It is found in the cytoplasm. Catalyzes the GTP-dependent ribosomal translocation step during translation elongation. During this step, the ribosome changes from the pre-translocational (PRE) to the post-translocational (POST) state as the newly formed A-site-bound peptidyl-tRNA and P-site-bound deacylated tRNA move to the P and E sites, respectively. Catalyzes the coordinated movement of the two tRNA molecules, the mRNA and conformational changes in the ribosome. The polypeptide is Elongation factor G (Rhodococcus opacus (strain B4)).